The chain runs to 704 residues: Elongation factor G (704 aa).

The tr-type G domain occupies 10–290 (NKVRNIGIMA…AVVDFLPNPL (281 aa)). Residues 19 to 26 (AHIDAGKT), 83 to 87 (DTPGH), and 137 to 140 (NKMD) contribute to the GTP site.

This sequence belongs to the TRAFAC class translation factor GTPase superfamily. Classic translation factor GTPase family. EF-G/EF-2 subfamily.

Its subcellular location is the cytoplasm. In terms of biological role, catalyzes the GTP-dependent ribosomal translocation step during translation elongation. During this step, the ribosome changes from the pre-translocational (PRE) to the post-translocational (POST) state as the newly formed A-site-bound peptidyl-tRNA and P-site-bound deacylated tRNA move to the P and E sites, respectively. Catalyzes the coordinated movement of the two tRNA molecules, the mRNA and conformational changes in the ribosome. This is Elongation factor G from Paenarthrobacter aurescens (strain TC1).